A 276-amino-acid polypeptide reads, in one-letter code: NADPH-dependent 7-cyano-7-deazaguanine reductase (276 aa).

83–85 (IES) is a binding site for substrate. Residue 85-86 (SK) participates in NADPH binding. Catalysis depends on Cys-184, which acts as the Thioimide intermediate. The Proton donor role is filled by Asp-191. 223–224 (HE) lines the substrate pocket. 252 to 253 (RG) provides a ligand contact to NADPH.

The protein belongs to the GTP cyclohydrolase I family. QueF type 2 subfamily. Homodimer.

Its subcellular location is the cytoplasm. It catalyses the reaction 7-aminomethyl-7-carbaguanine + 2 NADP(+) = 7-cyano-7-deazaguanine + 2 NADPH + 3 H(+). The protein operates within tRNA modification; tRNA-queuosine biosynthesis. Catalyzes the NADPH-dependent reduction of 7-cyano-7-deazaguanine (preQ0) to 7-aminomethyl-7-deazaguanine (preQ1). In Pseudomonas paraeruginosa (strain DSM 24068 / PA7) (Pseudomonas aeruginosa (strain PA7)), this protein is NADPH-dependent 7-cyano-7-deazaguanine reductase.